A 97-amino-acid polypeptide reads, in one-letter code: Small ribosomal subunit protein bS18c (97 aa).

This sequence belongs to the bacterial ribosomal protein bS18 family. As to quaternary structure, part of the 30S ribosomal subunit.

The protein resides in the plastid. Its subcellular location is the chloroplast. This Oenothera glazioviana (Large-flowered evening primrose) protein is Small ribosomal subunit protein bS18c.